A 217-amino-acid polypeptide reads, in one-letter code: Large ribosomal subunit protein uL29m (217 aa).

Belongs to the universal ribosomal protein uL29 family. In terms of assembly, component of the mitochondrial large ribosomal subunit. Mature mitochondrial ribosomes consist of a small (37S) and a large (54S) subunit. The 37S subunit contains at least 33 different proteins and 1 molecule of RNA (15S). The 54S subunit contains at least 45 different proteins and 1 molecule of RNA (21S).

It is found in the mitochondrion. The sequence is that of Large ribosomal subunit protein uL29m (mrpl4) from Neosartorya fischeri (strain ATCC 1020 / DSM 3700 / CBS 544.65 / FGSC A1164 / JCM 1740 / NRRL 181 / WB 181) (Aspergillus fischerianus).